Reading from the N-terminus, the 1360-residue chain is MASDSPARSLDEIDLSALRDPAGIFELVELVGNGTYGQVYKGRHVKTGQLAAIKVMDVTGDEEEEIKQEINMLKKYSHHRNIATYYGAFIKKNPPGMDDQLWLVMEFCGAGSVTDLIKNTKGNTLKEEWIAYICREILRGLSHLHQHKVIHRDIKGQNVLLTENAEVKLVDFGVSAQLDRTVGRRNTFIGTPYWMAPEVIACDENPDATYDFKSDLWSLGITAIEMAEGAPPLCDMHPMRALFLIPRNPAPRLKSKKWSKKFQSFIESCLVKNHSQRPATEQLMKHPFIRDQPNERQVRIQLKDHIDRTKKKRGEKDETEYEYSGSEEEEEENDSGEPSSILNLPGESTLRRDFLRLQLANKERSEALRRQQLEQQQRENEEHKRQLLAERQKRIEEQKEQRRRLEEQQRREKELRKQQEREQRRHYEEQMRREEERRRAEHEQEYIRRQLEEEQRQLEILQQQLLHEQALLLEYKRKQLEEQRQAERLQRQLKQERDYLVSLQHQRQEQRPVEKKPLYHYKEGMSPSEKPAWAKEVEERSRLNRQSSPAMPHKVANRISDPNLPPRSESFSISGVQPARTPPMLRPVDPQIPHLVAVKSQGPALTASQSVHEQPTKGLSGFQEALNVTSHRVEMPRQNSDPTSENPPLPTRIEKFDRSSWLRQEEDIPPKVPQRTTSISPALARKNSPGNGSALGPRLGSQPIRASNPDLRRTEPILESPLQRTSSGSSSSSSTPSSQPSSQGGSQPGSQAGSSERTRVRANSKSEGSPVLPHEPAKVKPEESRDITRPSRPASYKKAIDEDLTALAKELRELRIEETNRPMKKVTDYSSSSEESESSEEEEEDGESETHDGTVAVSDIPRLIPTGAPGSNEQYNVGMVGTHGLETSHADSFSGSISREGTLMIRETSGEKKRSGHSDSNGFAGHINLPDLVQQSHSPAGTPTEGLGRVSTHSQEMDSGTEYGMGSSTKASFTPFVDPRVYQTSPTDEDEEDEESSAAALFTSELLRQEQAKLNEARKISVVNVNPTNIRPHSDTPEIRKYKKRFNSEILCAALWGVNLLVGTENGLMLLDRSGQGKVYNLINRRRFQQMDVLEGLNVLVTISGKKNKLRVYYLSWLRNRILHNDPEVEKKQGWITVGDLEGCIHYKVVKYERIKFLVIALKNAVEIYAWAPKPYHKFMAFKSFADLQHKPLLVDLTVEEGQRLKVIFGSHTGFHVIDVDSGNSYDIYIPSHIQGNITPHAIVILPKTDGMEMLVCYEDEGVYVNTYGRITKDVVLQWGEMPTSVAYIHSNQIMGWGEKAIEIRSVETGHLDGVFMHKRAQRLKFLCERNDKVFFASVRSGGSSQVFFMTLNRNSMMNW.

The Protein kinase domain occupies 25-289 (FELVELVGNG…TEQLMKHPFI (265 aa)). Residues 31 to 39 (VGNGTYGQV) and K54 each bind ATP. D153 serves as the catalytic Proton acceptor. Position 187 is a phosphothreonine (T187). Disordered stretches follow at residues 284–347 (MKHP…LPGE), 398–440 (QKEQ…RRRA), and 539–589 (ERSR…RPVD). Positions 288–307 (FIRDQPNERQVRIQLKDHID) are enriched in basic and acidic residues. The tract at residues 290–1047 (RDQPNERQVR…EIRKYKKRFN (758 aa)) is mediates interaction with NEDD4. A compositionally biased stretch (acidic residues) spans 317–335 (DETEYEYSGSEEEEEENDS). A phosphoserine mark is found at S324 and S326. S560 and S570 each carry phosphoserine. At T581 the chain carries Phosphothreonine. Phosphoserine occurs at positions 600, 608, 610, and 640. Disordered regions lie at residues 601-801 (QGPA…KAID), 814-878 (LRIE…YNVG), 908-927 (TSGEKKRSGHSDSNGFAGHI), and 933-998 (VQQS…ESSA). Residues 652–669 (RIEKFDRSSWLRQEEDIP) show a composition bias toward basic and acidic residues. S678, S680, S688, S701, S707, S720, S764, S766, and S769 each carry phosphoserine. Residues 720–755 (SPLQRTSSGSSSSSSTPSSQPSSQGGSQPGSQAGSS) are compositionally biased toward low complexity. Composition is skewed to basic and acidic residues over residues 775-789 (EPAKVKPEESRDITR) and 814-827 (LRIEETNRPMKKVT). Residues 834-847 (EESESSEEEEEDGE) are compositionally biased toward acidic residues. A compositionally biased stretch (basic and acidic residues) spans 908-917 (TSGEKKRSGH). S959 bears the Phosphoserine mark. A compositionally biased stretch (acidic residues) spans 987 to 996 (TDEDEEDEES). Positions 1047-1334 (NSEILCAALW…KFLCERNDKV (288 aa)) constitute a CNH domain.

The protein belongs to the protein kinase superfamily. STE Ser/Thr protein kinase family. STE20 subfamily. Interacts (via the CNH domain) with RAP2A (GTP-bound form preferentially); the interaction is direct and required for the activation of TNIK by RAP2A. Interacts with NEDD4; recruits RAP2A to NEDD4. Interacts with TRAF2 and NCK. Interacts with TCF7L2/TCF4 and CTNNB1; the interaction is direct. Interacts with TANC1. Autophosphorylated. Autophosphorylation is activated by RAP2A and induces association to the cytoskeletal fraction. Expressed ubiquitously. Highest levels observed in heart, brain and skeletal muscle. Expressed in normal colonic epithelia and colorectal cancer tissues.

The protein resides in the nucleus. The protein localises to the cytoplasm. It is found in the recycling endosome. Its subcellular location is the cytoskeleton. It carries out the reaction L-seryl-[protein] + ATP = O-phospho-L-seryl-[protein] + ADP + H(+). The catalysed reaction is L-threonyl-[protein] + ATP = O-phospho-L-threonyl-[protein] + ADP + H(+). In terms of biological role, serine/threonine kinase that acts as an essential activator of the Wnt signaling pathway. Recruited to promoters of Wnt target genes and required to activate their expression. May act by phosphorylating TCF4/TCF7L2. Appears to act upstream of the JUN N-terminal pathway. May play a role in the response to environmental stress. Part of a signaling complex composed of NEDD4, RAP2A and TNIK which regulates neuronal dendrite extension and arborization during development. More generally, it may play a role in cytoskeletal rearrangements and regulate cell spreading. Phosphorylates SMAD1 on Thr-322. Activator of the Hippo signaling pathway which plays a pivotal role in organ size control and tumor suppression by restricting proliferation and promoting apoptosis. MAP4Ks act in parallel to and are partially redundant with STK3/MST2 and STK4/MST2 in the phosphorylation and activation of LATS1/2, and establish MAP4Ks as components of the expanded Hippo pathway. The chain is TRAF2 and NCK-interacting protein kinase from Homo sapiens (Human).